We begin with the raw amino-acid sequence, 217 residues long: Ubiquitin-conjugating enzyme E2 1 (217 aa).

The 148-residue stretch at 4–151 (NRSRRIAKEL…AREWTSSYAA (148 aa)) folds into the UBC core domain. The active-site Glycyl thioester intermediate is the C89.

Belongs to the ubiquitin-conjugating enzyme family.

The protein localises to the cytoplasm. The protein resides in the nucleus. The catalysed reaction is S-ubiquitinyl-[E1 ubiquitin-activating enzyme]-L-cysteine + [E2 ubiquitin-conjugating enzyme]-L-cysteine = [E1 ubiquitin-activating enzyme]-L-cysteine + S-ubiquitinyl-[E2 ubiquitin-conjugating enzyme]-L-cysteine.. It participates in protein modification; protein ubiquitination. Functionally, catalyzes the covalent attachment of ubiquitin to other proteins. Functions in degradation of misfolded or regulated proteins localized in the endoplasmic reticulum (ER) lumen or membrane via the ubiquitin-proteasome system. Cognate E2 conjugating enzyme for the HRD1 ubiquitin ligase complex, which is part of the ERAD-L and ERAD-M pathways responsible for the rapid degradation of soluble lumenal and membrane proteins with misfolded lumenal domains (ERAD-L), or ER-membrane proteins with misfolded transmembrane domains (ERAD-M). The chain is Ubiquitin-conjugating enzyme E2 1 (ubc1) from Schizosaccharomyces pombe (strain 972 / ATCC 24843) (Fission yeast).